Here is a 294-residue protein sequence, read N- to C-terminus: 4-hydroxy-tetrahydrodipicolinate synthase (294 aa).

Threonine 45 lines the pyruvate pocket. The active-site Proton donor/acceptor is the tyrosine 133. The active-site Schiff-base intermediate with substrate is the lysine 162. Isoleucine 204 is a binding site for pyruvate.

Belongs to the DapA family. As to quaternary structure, homotetramer; dimer of dimers.

It localises to the cytoplasm. It catalyses the reaction L-aspartate 4-semialdehyde + pyruvate = (2S,4S)-4-hydroxy-2,3,4,5-tetrahydrodipicolinate + H2O + H(+). The protein operates within amino-acid biosynthesis; L-lysine biosynthesis via DAP pathway; (S)-tetrahydrodipicolinate from L-aspartate: step 3/4. In terms of biological role, catalyzes the condensation of (S)-aspartate-beta-semialdehyde [(S)-ASA] and pyruvate to 4-hydroxy-tetrahydrodipicolinate (HTPA). The protein is 4-hydroxy-tetrahydrodipicolinate synthase of Bartonella quintana (strain Toulouse) (Rochalimaea quintana).